A 357-amino-acid chain; its full sequence is Probable glutamine amidotransferase DUG3 (357 aa).

Cys2 (for GATase activity) is an active-site residue. Positions 2–260 constitute a Glutamine amidotransferase type-2 domain; it reads CRFLIFKGKQ…PGEYRVERLD (259 aa).

It belongs to the DUG3 family. Component of the GSH degradosomal complex composed of at least DUG1, DUG2 and DUG3.

The protein localises to the cytoplasm. Functionally, component of the GSH degradosomal complex involved in the degradation of glutathione (GSH) and other peptides containing a gamma-glu-X bond. The protein is Probable glutamine amidotransferase DUG3 (DUG3) of Saccharomyces cerevisiae (strain ATCC 204508 / S288c) (Baker's yeast).